Consider the following 94-residue polypeptide: Small ribosomal subunit protein uS17 (94 aa).

Belongs to the universal ribosomal protein uS17 family. Part of the 30S ribosomal subunit.

Its function is as follows. One of the primary rRNA binding proteins, it binds specifically to the 5'-end of 16S ribosomal RNA. This Deinococcus geothermalis (strain DSM 11300 / CIP 105573 / AG-3a) protein is Small ribosomal subunit protein uS17.